Consider the following 236-residue polypeptide: Apoptosis regulator Bcl-2 (236 aa).

A BH4 motif is present at residues 10–30 (DNREIVMKYIHYKLSQRGYEW). Position 69 is a phosphothreonine; by MAPK8 (T69). S70 is subject to Phosphoserine; by MAPK8 and PKC. S84 is subject to Phosphoserine; by MAPK8. The BH3 motif lies at 90 to 104 (VHLTLRRAGDDFSRR). The short motif at 133-152 (ELFRDGVNWGRIVAFFEFGG) is the BH1 element. The short motif at 184 to 199 (TWIQDNGGWDAFVELY) is the BH2 element. The chain crosses the membrane as a helical span at residues 209–230 (FSWLSLKTLLSLALVGACITLG).

It belongs to the Bcl-2 family. Forms homodimers, and heterodimers with BAX, BAD, BAK and Bcl-X(L). Heterodimerization with BAX requires intact BH1 and BH2 motifs, and is necessary for anti-apoptotic activity. Component of the complex, at least composed of LRPPRC, BECN1 and BCL2; the interactions prevent BECN1 from forming an autophagy-inducing complex with PIK3C3. Interacts with EI24. Also interacts with APAF1, BBC3, BCL2L1, BNIPL, MRPL41 and TP53BP2. Binding to FKBP8 seems to target BCL2 to the mitochondria and probably interferes with the binding of BCL2 to its targets. Interacts with BAG1 in an ATP-dependent manner. Interacts with RAF1 (the 'Ser-338' and 'Ser-339' phosphorylated form). Interacts (via the BH4 domain) with EGLN3; the interaction prevents the formation of the BAX-BCL2 complex and inhibits the anti-apoptotic activity of BCL2. Interacts with G0S2; this interaction also prevents the formation of the anti-apoptotic BAX-BCL2 complex. Interacts with RTL10/BOP. Interacts with the SCF(FBXO10) complex. Interacts (via the loop between motifs BH4 and BH3) with NLRP1 (via LRR repeats), but not with NLRP2, NLRP3, NLRP4, PYCARD, nor MEFV. Interacts with GIMAP3/IAN4, GIMAP4/IAN1 and GIMAP5/IAN5. Interacts with BCAP31. Interacts with IRF3; the interaction is inhibited by Sendai virus infection. Interacts with BECN1; thereby inhibiting autophagy in non-starvation conditions. Interacts with AMBRA1; thereby inhibiting autophagy. In terms of processing, phosphorylation/dephosphorylation on Ser-70 regulates anti-apoptotic activity. Growth factor-stimulated phosphorylation on Ser-70 by PKC is required for the anti-apoptosis activity and occurs during the G2/M phase of the cell cycle. In the absence of growth factors, BCL2 appears to be phosphorylated by other protein kinases such as ERKs and stress-activated kinases. Phosphorylated by MAPK8/JNK1 at Thr-69, Ser-70 and Ser-84, which stimulates starvation-induced autophagy. Dephosphorylated by protein phosphatase 2A (PP2A). Proteolytically cleaved by caspases during apoptosis. The cleaved protein, lacking the BH4 motif, has pro-apoptotic activity, causes the release of cytochrome c into the cytosol promoting further caspase activity. Post-translationally, monoubiquitinated by PRKN, leading to an increase in its stability. Ubiquitinated by SCF(FBXO10), leading to its degradation by the proteasome.

It is found in the mitochondrion outer membrane. The protein resides in the nucleus membrane. Its subcellular location is the endoplasmic reticulum membrane. It localises to the cytoplasm. Its function is as follows. Suppresses apoptosis in a variety of cell systems including factor-dependent lymphohematopoietic and neural cells. Regulates cell death by controlling the mitochondrial membrane permeability. Appears to function in a feedback loop system with caspases. Inhibits caspase activity either by preventing the release of cytochrome c from the mitochondria and/or by binding to the apoptosis-activating factor (APAF-1). Also acts as an inhibitor of autophagy: interacts with BECN1 and AMBRA1 during non-starvation conditions and inhibits their autophagy function. May attenuate inflammation by impairing NLRP1-inflammasome activation, hence CASP1 activation and IL1B release. This is Apoptosis regulator Bcl-2 (BCL2) from Cricetulus griseus (Chinese hamster).